A 594-amino-acid chain; its full sequence is Maternal effect protein oskar (594 aa).

Residues 44-62 (QQQPKQQQQQQQHQSQHQH) show a composition bias toward low complexity. The interval 44–68 (QQQPKQQQQQQQHQSQHQHQQQKQK) is disordered. The HTH OST-type domain maps to 174 to 243 (EYPDIDTEIR…SGKRIFNIKP (70 aa)).

As to quaternary structure, interacts with smaug (smg). Posterior pole of the oocyte.

In terms of biological role, organizes the germ plasm and directs localization of the posterior determinant nanos. Oskar protein is required to keep oskar RNA and staufen protein at the posterior pole. The sequence is that of Maternal effect protein oskar (osk) from Drosophila virilis (Fruit fly).